Here is a 316-residue protein sequence, read N- to C-terminus: Pantothenate kinase (316 aa).

95 to 102 contributes to the ATP binding site; sequence GSVAVGKS.

The protein belongs to the prokaryotic pantothenate kinase family.

Its subcellular location is the cytoplasm. It catalyses the reaction (R)-pantothenate + ATP = (R)-4'-phosphopantothenate + ADP + H(+). The protein operates within cofactor biosynthesis; coenzyme A biosynthesis; CoA from (R)-pantothenate: step 1/5. In Shewanella sp. (strain MR-7), this protein is Pantothenate kinase.